Reading from the N-terminus, the 1179-residue chain is Dynein axonemal assembly factor 9 (1179 aa).

In terms of assembly, interacts with ARL3.

May act as an effector for ARL3. The sequence is that of Dynein axonemal assembly factor 9 from Mus musculus (Mouse).